Here is a 536-residue protein sequence, read N- to C-terminus: GMP synthase [glutamine-hydrolyzing] (536 aa).

Residues 19–212 (RILILDFGSQ…VHEICDCAGS (194 aa)) enclose the Glutamine amidotransferase type-1 domain. Cys96 serves as the catalytic Nucleophile. Active-site residues include His186 and Glu188. In terms of domain architecture, GMPS ATP-PPase spans 213–411 (WTPDNIIDMR…LGLPAKMINR (199 aa)). 240-246 (SGGVDSS) serves as a coordination point for ATP.

As to quaternary structure, homodimer.

It carries out the reaction XMP + L-glutamine + ATP + H2O = GMP + L-glutamate + AMP + diphosphate + 2 H(+). It participates in purine metabolism; GMP biosynthesis; GMP from XMP (L-Gln route): step 1/1. In terms of biological role, catalyzes the synthesis of GMP from XMP. This Psychrobacter arcticus (strain DSM 17307 / VKM B-2377 / 273-4) protein is GMP synthase [glutamine-hydrolyzing].